Consider the following 269-residue polypeptide: Malonyl-[acyl-carrier protein] O-methyltransferase (269 aa).

Belongs to the methyltransferase superfamily.

It carries out the reaction malonyl-[ACP] + S-adenosyl-L-methionine = malonyl-[ACP] methyl ester + S-adenosyl-L-homocysteine. The protein operates within cofactor biosynthesis; biotin biosynthesis. In terms of biological role, converts the free carboxyl group of a malonyl-thioester to its methyl ester by transfer of a methyl group from S-adenosyl-L-methionine (SAM). It allows to synthesize pimeloyl-ACP via the fatty acid synthetic pathway. This chain is Malonyl-[acyl-carrier protein] O-methyltransferase, found in Bacillus cereus (strain ATCC 14579 / DSM 31 / CCUG 7414 / JCM 2152 / NBRC 15305 / NCIMB 9373 / NCTC 2599 / NRRL B-3711).